A 365-amino-acid polypeptide reads, in one-letter code: tRNA/tmRNA (uracil-C(5))-methyltransferase (365 aa).

S-adenosyl-L-methionine is bound by residues Gln196, Tyr224, Asn229, Glu245, and Asp298. Cys323 acts as the Nucleophile in catalysis. The active-site Proton acceptor is the Glu357.

It belongs to the class I-like SAM-binding methyltransferase superfamily. RNA M5U methyltransferase family. TrmA subfamily.

It carries out the reaction uridine(54) in tRNA + S-adenosyl-L-methionine = 5-methyluridine(54) in tRNA + S-adenosyl-L-homocysteine + H(+). The catalysed reaction is uridine(341) in tmRNA + S-adenosyl-L-methionine = 5-methyluridine(341) in tmRNA + S-adenosyl-L-homocysteine + H(+). In terms of biological role, dual-specificity methyltransferase that catalyzes the formation of 5-methyluridine at position 54 (m5U54) in all tRNAs, and that of position 341 (m5U341) in tmRNA (transfer-mRNA). The chain is tRNA/tmRNA (uracil-C(5))-methyltransferase from Nautilia profundicola (strain ATCC BAA-1463 / DSM 18972 / AmH).